Reading from the N-terminus, the 324-residue chain is Glyoxylate/hydroxypyruvate reductase B (324 aa).

Active-site residues include R237 and E266. The active-site Proton donor is the H285.

It belongs to the D-isomer specific 2-hydroxyacid dehydrogenase family. GhrB subfamily. Homodimer.

The protein localises to the cytoplasm. It carries out the reaction glycolate + NADP(+) = glyoxylate + NADPH + H(+). The catalysed reaction is (R)-glycerate + NAD(+) = 3-hydroxypyruvate + NADH + H(+). The enzyme catalyses (R)-glycerate + NADP(+) = 3-hydroxypyruvate + NADPH + H(+). Its function is as follows. Catalyzes the NADPH-dependent reduction of glyoxylate and hydroxypyruvate into glycolate and glycerate, respectively. The protein is Glyoxylate/hydroxypyruvate reductase B of Escherichia coli O6:H1 (strain CFT073 / ATCC 700928 / UPEC).